The primary structure comprises 285 residues: Probable endonuclease 4 (285 aa).

The Zn(2+) site is built by histidine 69, histidine 109, glutamate 145, aspartate 179, histidine 182, histidine 216, aspartate 229, histidine 231, and glutamate 261.

This sequence belongs to the AP endonuclease 2 family. The cofactor is Zn(2+).

It catalyses the reaction Endonucleolytic cleavage to 5'-phosphooligonucleotide end-products.. Its function is as follows. Endonuclease IV plays a role in DNA repair. It cleaves phosphodiester bonds at apurinic or apyrimidinic (AP) sites, generating a 3'-hydroxyl group and a 5'-terminal sugar phosphate. The protein is Probable endonuclease 4 of Salmonella dublin (strain CT_02021853).